The primary structure comprises 525 residues: MKVLTTALLLVTLQCSHALSPTNCDASKPLAEKVLDLINKGRRSGYTFQLLRVSDAHLDRVETATIYYLVLDVVESDCWVLSTKAQDECLPAMRTSEVVIGQCKVIATRYSNESQDLSVNGYNCTMRSVSSAYINTKDSPVLVDSFEDSEPYRKLARKALDKYKAENGDFASFRVERAERVIRMRGGERTSYFIEFSVRNCSTQHFPRHPPVFGLCRVVLTYSTEASDLETPEYTDLICEVFNTEDLKNRSDMKPHRGHEHPHCDKHLCKLSGPRDHHHTHKTHEIGCPPPPEGKDNSDRPPLQEGALPQMLPGHSGPSGTNRSHRPPHNHSCNEHPCHGQHPHGHHPHGQHPHGHHPHGQHPHGHHPHGQHPHGHHPHGQHPHGHHPHGHHPHGDHPHGHHPHGHDFLDYGPCDPPSNSQELKGQYHRGHGPPHGHSRKRGPGKGLFPFHQRQIGYVYRLPPLNVGEVLTPPEANFPIFSLPNCNRPPQPEIRPFPQTASKSCPGKFEGKFPQVSNFFEHTPPK.

The N-terminal stretch at 1–18 (MKVLTTALLLVTLQCSHA) is a signal peptide. The region spanning 19–122 (LSPTNCDASK…ESQDLSVNGY (104 aa)) is the Cystatin 1 domain. Disulfide bonds link C24-C504, C78-C89, C103-C124, C201-C414, and C216-C239. Residues 41–84 (GRRSGYTFQLLRVSDAHLDRVETATIYYLVLDVVESDCWVLSTK) are interaction with ATP5F1A. N112 and N123 each carry an N-linked (GlcNAc...) asparagine glycan. The region spanning 135-240 (NTKDSPVLVD…TPEYTDLICE (106 aa)) is the Cystatin 2 domain. S145 is subject to Phosphoserine. Residue N200 is glycosylated (N-linked (GlcNAc...) asparagine). Residues 275–445 (RDHHHTHKTH…GHSRKRGPGK (171 aa)) are disordered. Residues N322 and N330 are each glycosylated (N-linked (GlcNAc...) asparagine). Composition is skewed to basic residues over residues 339–392 (HGQH…HGHH) and 426–443 (QYHRGHGPPHGHSRKRGP). A Phosphoserine modification is found at S438.

As to quaternary structure, interacts with THBS1 (via the TSP type I repeats); the interaction blocks the antiangiogenic effect of THBS1 with CD36. Interacts with HPSE; the interaction is enhanced at acidic pH, partially inhibits binding of HPSE to cell surface receptors and modulates its enzymatic activity. Interacts (via the HRR domain) with TMP1; the interaction partially mediates the antiangiogenic properties of HRG. Interacts with kappa and lambda light chains of IgG molecules. Interacts with ATP5F1A; the interaction occurs on the surface of T-cells and alters their cell morphology in concert with CONA. Binds IgG molecules containing kappa and lambda light chains and inhibits the formation of insoluble immunoglobulin complexes. Interacts with F12; the interaction, which is enhanced in the presence of zinc ions and inhibited by heparin-binding to HRG, inhibits factor XII autoactivation and contact-initiated coagulation. Interacts with PLG (via its Kringle domains); the interaction tethers PLG to the cell surface and enhances its activation. Interacts (via the HRR domain) with TPM1; the interaction appears to contribute to the antiangiogenic properties of the HRR domain. Interacts with THBS2; the interaction blocks the antiangiogenic effect of THBS2 with CD36. Post-translationally, N-glycosylated. Proteolytic cleavage produces several HRG fragments which are mostly disulfide-linked and, therefore, not released. Cleavage by plasmin is inhibited in the presence of heparin, zinc ions or in an acidic environment. Cleavage reduces binding of HRG to heparan sulfate, but enhances the ability of HRG to bind and tether plasminogen to the cell surface. On platelet activation, releases a 33 kDa antiangiogenic peptide which encompasses the HRR. Also cleaved in the C-terminal by plasmin. As to expression, expressed in liver, blood plasma, serum and in platelets. Also present in fibrin clots, wound fluid from acute wounds and chronic leg ulcers.

It localises to the secreted. Its function is as follows. Plasma glycoprotein that binds a number of ligands such as heme, heparin, heparan sulfate, thrombospondin, plasminogen, and divalent metal ions. Inhibits rosette formation. Acts as an adapter protein and implicated in regulating many processes such as immune complex and pathogen clearance, cell adhesion, angiogenesis, coagulation and fibrinolysis. Mediates clearance of necrotic cells through enhancing the phagocytosis of necrotic cells in a heparan sulfate-dependent pathway. This process can be regulated by the presence of certain HRG ligands such as heparin and zinc ions. Binds to IgG subclasses of immunoglobins containing kappa and lambda light chains with different affinities regulating their clearance and inhibiting the formation of insoluble immune complexes. Tethers plasminogen to the cell surface. Binds T-cells and alters the cell morphology. Modulates angiogenesis by blocking the CD6-mediated antiangiongenic effect of thrombospondins, THBS1 and THBS2. This Rattus norvegicus (Rat) protein is Histidine-rich glycoprotein (Hrg).